Reading from the N-terminus, the 340-residue chain is Erlin-2 (340 aa).

The Cytoplasmic segment spans residues 1–3; that stretch reads MAQ. A helical transmembrane segment spans residues 4-24; that stretch reads LGAVVAVASSFFCASLFSAVH. The Lumenal segment spans residues 25-340; that stretch reads KIEEGHIGVY…EPLEAPTKEN (316 aa). N-linked (GlcNAc...) asparagine glycosylation occurs at Asn-106. Residues 177-309 are interaction with ERLIN1; it reads EAIRRNYELM…DIPNMFMDSA (133 aa). The residue at position 267 (Lys-267) is an N6-acetyllysine.

The protein belongs to the band 7/mec-2 family. As to quaternary structure, forms a heteromeric complex with ERLIN1. In complex with ERLIN1, interacts with RNF170. Interacts with activated ITPR1, independently of the degree of ITPR1 polyubiquitination. Interacts with SCAP, INSIG1, SREBF1 and SREBF2 under cholesterol sufficiency conditions; indicative for an association with the SCAP-SREBP-INSIG complex. Probably part of an AMFR/gp78 and INSIG1-containing ubiquitin ligase complex involved in ERAD of HMGCR. Interacts with TMUB1; TMUB1 bridges the association with AMFR. Interacts with SYVN1 and RNF139. Interacts with TMEM259. Interacts with TMEM41B. Deubiquitinated by USP25; leading to stabilization.

The protein localises to the endoplasmic reticulum membrane. Component of the ERLIN1/ERLIN2 complex which mediates the endoplasmic reticulum-associated degradation (ERAD) of inositol 1,4,5-trisphosphate receptors (IP3Rs) such as ITPR1. Promotes sterol-accelerated ERAD of HMGCR probably implicating an AMFR/gp78-containing ubiquitin ligase complex. Involved in regulation of cellular cholesterol homeostasis by regulation the SREBP signaling pathway. May promote ER retention of the SCAP-SREBF complex. This chain is Erlin-2 (Erlin2), found in Mus musculus (Mouse).